The sequence spans 473 residues: Proline transporter 1 (473 aa).

The span at Met1 to Gln11 shows a compositional bias: basic and acidic residues. The disordered stretch occupies residues Met1 to Glu31. The next 11 helical transmembrane spans lie at Pro65–Tyr85, Ser88–Ile108, Leu145–Ala165, Ile188–Leu208, Ile210–Ser230, Ile252–Pro272, Leu290–Trp310, Val333–Met353, Val378–Leu398, Phe401–Met421, and Trp437–Val457.

Belongs to the amino acid/polyamine transporter 2 family. Amino acid/auxin permease (AAAP) (TC 2.A.18.3) subfamily. Expressed in roots, leaf blades and sheaths, stems and young panicle.

The protein resides in the cell membrane. Functionally, proline transporter that mediates proline transport across the plasma membrane when expressed in a heterologous system (Xenopus oocytes). In Oryza sativa subsp. japonica (Rice), this protein is Proline transporter 1 (PROT1).